The sequence spans 356 residues: Ferredoxin--NADP reductase (356 aa).

8 residues coordinate FAD: Thr-25, Glu-44, Gln-52, Tyr-57, Val-97, Phe-132, Asp-298, and Ser-339.

This sequence belongs to the ferredoxin--NADP reductase type 2 family. In terms of assembly, homodimer. FAD serves as cofactor.

The enzyme catalyses 2 reduced [2Fe-2S]-[ferredoxin] + NADP(+) + H(+) = 2 oxidized [2Fe-2S]-[ferredoxin] + NADPH. This Chlorobaculum parvum (strain DSM 263 / NCIMB 8327) (Chlorobium vibrioforme subsp. thiosulfatophilum) protein is Ferredoxin--NADP reductase.